We begin with the raw amino-acid sequence, 172 residues long: R-phycocyanin beta subunit (172 aa).

N72 bears the N4-methylasparagine mark. C82 is a (2R,3E)-phycocyanobilin binding site. C153 serves as a coordination point for (2R,3E)-phycoerythrobilin.

It belongs to the phycobiliprotein family. Heterodimer of an alpha and a beta subunit, which further assembles into trimers and the trimers into hexamers. Post-translationally, contains two covalently linked bilin chromophores.

Its subcellular location is the cellular thylakoid membrane. Functionally, light-harvesting photosynthetic bile pigment-protein from the phycobiliprotein complex (phycobilisome, PBS). Phycocyanin is the major phycobiliprotein in the PBS rod. In Synechococcus sp. (strain WH7803), this protein is R-phycocyanin beta subunit (rpcB).